The following is a 157-amino-acid chain: 3-hydroxyacyl-[acyl-carrier-protein] dehydratase FabZ (157 aa).

His-58 is a catalytic residue.

The protein belongs to the thioester dehydratase family. FabZ subfamily.

It is found in the cytoplasm. It catalyses the reaction a (3R)-hydroxyacyl-[ACP] = a (2E)-enoyl-[ACP] + H2O. Its function is as follows. Involved in unsaturated fatty acids biosynthesis. Catalyzes the dehydration of short chain beta-hydroxyacyl-ACPs and long chain saturated and unsaturated beta-hydroxyacyl-ACPs. The sequence is that of 3-hydroxyacyl-[acyl-carrier-protein] dehydratase FabZ from Brucella melitensis biotype 2 (strain ATCC 23457).